The chain runs to 304 residues: Ribonuclease Z (304 aa).

Zn(2+) is bound by residues histidine 63, histidine 65, aspartate 67, histidine 68, histidine 141, aspartate 208, and histidine 266. The active-site Proton acceptor is the aspartate 67.

This sequence belongs to the RNase Z family. As to quaternary structure, homodimer. The cofactor is Zn(2+).

The enzyme catalyses Endonucleolytic cleavage of RNA, removing extra 3' nucleotides from tRNA precursor, generating 3' termini of tRNAs. A 3'-hydroxy group is left at the tRNA terminus and a 5'-phosphoryl group is left at the trailer molecule.. Zinc phosphodiesterase, which displays some tRNA 3'-processing endonuclease activity. Probably involved in tRNA maturation, by removing a 3'-trailer from precursor tRNA. The chain is Ribonuclease Z from Chlamydia trachomatis serovar L2 (strain ATCC VR-902B / DSM 19102 / 434/Bu).